The chain runs to 173 residues: Zinc finger A20 and AN1 domain-containing stress-associated protein 2 (173 aa).

An A20-type zinc finger spans residues 12 to 46 (PEGPKLCTNNCGFFGSAATMNMCSKCHKDMLFQQE). Zn(2+) is bound by residues Cys18, Cys22, Cys34, Cys37, Cys114, Cys117, Cys128, Cys130, Cys135, His138, His144, and Cys146. The AN1-type zinc finger occupies 108-154 (PKGPSRCTTCNKRVGLTGFKCRCGSLFCGTHRYADVHDCSFNYHAAA).

In terms of biological role, may be involved in environmental stress response. This Arabidopsis thaliana (Mouse-ear cress) protein is Zinc finger A20 and AN1 domain-containing stress-associated protein 2 (SAP2).